The following is a 270-amino-acid chain: 3-methyl-2-oxobutanoate hydroxymethyltransferase (270 aa).

Mg(2+)-binding residues include Asp43 and Asp82. 3-methyl-2-oxobutanoate contacts are provided by residues Asp43–Ser44, Asp82, and Lys112. Glu114 provides a ligand contact to Mg(2+). The Proton acceptor role is filled by Glu179.

The protein belongs to the PanB family. In terms of assembly, homodecamer; pentamer of dimers. Requires Mg(2+) as cofactor.

It is found in the cytoplasm. The catalysed reaction is 3-methyl-2-oxobutanoate + (6R)-5,10-methylene-5,6,7,8-tetrahydrofolate + H2O = 2-dehydropantoate + (6S)-5,6,7,8-tetrahydrofolate. The protein operates within cofactor biosynthesis; (R)-pantothenate biosynthesis; (R)-pantoate from 3-methyl-2-oxobutanoate: step 1/2. Catalyzes the reversible reaction in which hydroxymethyl group from 5,10-methylenetetrahydrofolate is transferred onto alpha-ketoisovalerate to form ketopantoate. The sequence is that of 3-methyl-2-oxobutanoate hydroxymethyltransferase from Oceanobacillus iheyensis (strain DSM 14371 / CIP 107618 / JCM 11309 / KCTC 3954 / HTE831).